The chain runs to 725 residues: Methionine--tRNA ligase (725 aa).

The 'HIGH' region motif lies at 27-37 (PYANGQIHIGH). Zn(2+) contacts are provided by cysteine 158, cysteine 161, cysteine 171, and cysteine 174. Residues 348–352 (KMSKS) carry the 'KMSKS' region motif. Position 351 (lysine 351) interacts with ATP. One can recognise a tRNA-binding domain in the interval 619–725 (DFAKIDLRIA…SGAKPGMRVK (107 aa)).

The protein belongs to the class-I aminoacyl-tRNA synthetase family. MetG type 1 subfamily. As to quaternary structure, homodimer. Zn(2+) is required as a cofactor.

The protein resides in the cytoplasm. It catalyses the reaction tRNA(Met) + L-methionine + ATP = L-methionyl-tRNA(Met) + AMP + diphosphate. Is required not only for elongation of protein synthesis but also for the initiation of all mRNA translation through initiator tRNA(fMet) aminoacylation. In Burkholderia pseudomallei (strain 668), this protein is Methionine--tRNA ligase.